The sequence spans 176 residues: Cystatin-related protein 1 (176 aa).

Residues 1-26 (MCKTLHGTLLLLAIFVLFLNFSHATA) form the signal peptide. The propeptide occupies 27 to 31 (KRTRR). Asn71 carries an N-linked (GlcNAc...) asparagine glycan. 2 cysteine pairs are disulfide-bonded: Cys129/Cys139 and Cys153/Cys173.

It belongs to the cystatin family. As to expression, prostate and lacrimal gland.

This is Cystatin-related protein 1 (Andpro) from Rattus norvegicus (Rat).